A 134-amino-acid chain; its full sequence is MDTYMNRLDLDKLKHENIFSGNIIEDAKEFVFGSRKIYTDSVNDLIELYNLAKYLNNEKLKDVVIERMDYVCKYIIGKDNWYTIYSFYKENGLRNSFLRQYINNNIEEIRNTDQFLKFDVDSVCDILNNDETIV.

One can recognise a BACK domain in the interval 88–133 (YKENGLRNSFLRQYINNNIEEIRNTDQFLKFDVDSVCDILNNDETI).

It belongs to the orthopoxvirus OPG030 family.

The protein is Protein OPG030 (OPG30) of Variola virus (isolate Human/India/Ind3/1967) (VARV).